Here is a 440-residue protein sequence, read N- to C-terminus: tRNA-2-methylthio-N(6)-dimethylallyladenosine synthase (440 aa).

The region spanning 7 to 123 (NTFYIHTFGC…LPQLIEQARS (117 aa)) is the MTTase N-terminal domain. [4Fe-4S] cluster contacts are provided by C16, C52, C86, C159, C163, and C166. Residues 145 to 375 (RQGSISAFVP…IDLQNTISGE (231 aa)) form the Radical SAM core domain. Residues 378-440 (QQAIGSVVEV…TSATLTGRPV (63 aa)) form the TRAM domain.

This sequence belongs to the methylthiotransferase family. MiaB subfamily. In terms of assembly, monomer. [4Fe-4S] cluster serves as cofactor.

The protein resides in the cytoplasm. It carries out the reaction N(6)-dimethylallyladenosine(37) in tRNA + (sulfur carrier)-SH + AH2 + 2 S-adenosyl-L-methionine = 2-methylsulfanyl-N(6)-dimethylallyladenosine(37) in tRNA + (sulfur carrier)-H + 5'-deoxyadenosine + L-methionine + A + S-adenosyl-L-homocysteine + 2 H(+). Its function is as follows. Catalyzes the methylthiolation of N6-(dimethylallyl)adenosine (i(6)A), leading to the formation of 2-methylthio-N6-(dimethylallyl)adenosine (ms(2)i(6)A) at position 37 in tRNAs that read codons beginning with uridine. The protein is tRNA-2-methylthio-N(6)-dimethylallyladenosine synthase of Pelodictyon phaeoclathratiforme (strain DSM 5477 / BU-1).